Reading from the N-terminus, the 100-residue chain is Large ribosomal subunit protein eL30 (100 aa).

This sequence belongs to the eukaryotic ribosomal protein eL30 family.

This is Large ribosomal subunit protein eL30 from Methanococcus maripaludis (strain DSM 14266 / JCM 13030 / NBRC 101832 / S2 / LL).